A 275-amino-acid chain; its full sequence is 3-methyl-2-oxobutanoate hydroxymethyltransferase (275 aa).

The Mg(2+) site is built by aspartate 55 and aspartate 94. 3-methyl-2-oxobutanoate contacts are provided by residues 55-56, aspartate 94, and lysine 123; that span reads DS. Position 125 (glutamate 125) interacts with Mg(2+). The active-site Proton acceptor is glutamate 192.

Belongs to the PanB family. In terms of assembly, homodecamer; pentamer of dimers. Mg(2+) serves as cofactor.

It localises to the cytoplasm. The enzyme catalyses 3-methyl-2-oxobutanoate + (6R)-5,10-methylene-5,6,7,8-tetrahydrofolate + H2O = 2-dehydropantoate + (6S)-5,6,7,8-tetrahydrofolate. It participates in cofactor biosynthesis; (R)-pantothenate biosynthesis; (R)-pantoate from 3-methyl-2-oxobutanoate: step 1/2. Its function is as follows. Catalyzes the reversible reaction in which hydroxymethyl group from 5,10-methylenetetrahydrofolate is transferred onto alpha-ketoisovalerate to form ketopantoate. The sequence is that of 3-methyl-2-oxobutanoate hydroxymethyltransferase from Halorhodospira halophila (strain DSM 244 / SL1) (Ectothiorhodospira halophila (strain DSM 244 / SL1)).